The following is a 1823-amino-acid chain: THO complex subunit 2 (1823 aa).

A coiled-coil region spans residues 935–1003 (NRYESEISKQ…RRRLSREKDT (69 aa)). A Nuclear localization signal motif is present at residues 964–969 (KRKKEK). Disordered regions lie at residues 1244-1382 (LVGV…KDLN) and 1394-1823 (ALSS…GSRE). Composition is skewed to basic and acidic residues over residues 1272-1283 (QMLKTKPLDGRT), 1312-1330 (KSME…DENP), and 1356-1367 (AKQDFGKDDGKS). A compositionally biased stretch (polar residues) spans 1394 to 1409 (ALSSTAANGSIATGSS). The span at 1432–1596 (PRHEIVTSVR…EKSHPDDHFH (165 aa)) shows a compositional bias: basic and acidic residues. A compositionally biased stretch (pro residues) spans 1600-1610 (LPPPPPLPPNI). 4 stretches are compositionally biased toward basic and acidic residues: residues 1616 to 1625 (AAKEDLERRA), 1636 to 1648 (PRHE…RSEE), 1655 to 1706 (DDAK…FEAS), and 1768 to 1785 (LGKE…DPIA). Phosphoserine is present on residues serine 1646 and serine 1696. Residues 1802 to 1816 (MTVNGKTTRGEQSGS) show a composition bias toward polar residues.

Belongs to the THOC2 family. Component of the THO complex, which is composed of THO1, THO2, THO3, THO5, THO6 and THO7.

The protein resides in the nucleus. In terms of biological role, acts as a component of the THO subcomplex of the TREX complex which is thought to couple mRNA transcription, processing and nuclear export. The protein is THO complex subunit 2 (THO2) of Arabidopsis thaliana (Mouse-ear cress).